We begin with the raw amino-acid sequence, 471 residues long: Tryptophanase (471 aa).

3 positions are modified to N6-acetyllysine: Lys-5, Lys-115, and Lys-156. N6-(pyridoxal phosphate)lysine is present on Lys-270. Lys-450 is modified (N6-acetyllysine).

Belongs to the beta-eliminating lyase family. In terms of assembly, homotetramer. The cofactor is pyridoxal 5'-phosphate.

The catalysed reaction is L-tryptophan + H2O = indole + pyruvate + NH4(+). It participates in amino-acid degradation; L-tryptophan degradation via pyruvate pathway; indole and pyruvate from L-tryptophan: step 1/1. The sequence is that of Tryptophanase from Escherichia coli O6:H1 (strain CFT073 / ATCC 700928 / UPEC).